Here is a 574-residue protein sequence, read N- to C-terminus: E3 ubiquitin-protein ligase NEURL1 (574 aa).

Positions 1 to 18 (MGNNFSSVSSLQRGNPSR) are enriched in polar residues. The segment at 1–53 (MGNNFSSVSSLQRGNPSRASRGHPQNLKDSIGGSFPVPSHRCHHKQKHCPPTL) is disordered. The N-myristoyl glycine moiety is linked to residue G2. 2 consecutive NHR domains span residues 61 to 217 (TPLL…QLLD) and 292 to 447 (GDLR…RILG). The segment at 520–560 (ECTICYEHAVDTVIYTCGHMCLCYSCGLRLKKALHACCPIC) adopts an RING-type zinc-finger fold.

In terms of assembly, interacts with CPEB3 (via N-terminal domain); the interaction increases CPEB3 ubiquitination. Interacts with DLL1. Post-translationally, myristoylation is a determinant of membrane targeting. As to expression, expressed in CA1 pyramidal neurons (at protein level). Expressed throughout the adult forebrain, including the cerebral cortex, amygdala, striatum, and CA1 area of the hippocampus. Expressed in sensory neurons of the olfactory epithelium, the vomeronasal organ, mammary gland and skeletal muscle.

The protein resides in the cytoplasm. It localises to the perinuclear region. Its subcellular location is the cell membrane. The protein localises to the perikaryon. It is found in the cell projection. The protein resides in the dendrite. It localises to the postsynaptic density. It carries out the reaction S-ubiquitinyl-[E2 ubiquitin-conjugating enzyme]-L-cysteine + [acceptor protein]-L-lysine = [E2 ubiquitin-conjugating enzyme]-L-cysteine + N(6)-ubiquitinyl-[acceptor protein]-L-lysine.. The protein operates within protein modification; protein ubiquitination. Its function is as follows. Plays a role in hippocampal-dependent synaptic plasticity, learning and memory. Involved in the formation of spines and functional synaptic contacts by modulating the translational activity of the cytoplasmic polyadenylation element-binding protein CPEB3. Promotes ubiquitination of CPEB3, and hence induces CPEB3-dependent mRNA translation activation of glutamate receptor GRIA1 and GRIA2. Can function as an E3 ubiquitin-protein ligase to activate monoubiquitination of JAG1 (in vitro), thereby regulating the Notch pathway. Acts as a tumor suppressor; inhibits malignant cell transformation of medulloblastoma (MB) cells by inhibiting the Notch signaling pathway. The sequence is that of E3 ubiquitin-protein ligase NEURL1 (Neurl1) from Mus musculus (Mouse).